The primary structure comprises 563 residues: Probable lysosomal cobalamin transporter (563 aa).

5 helical membrane passes run 8–28 (LIWFAYLIVITVLIVVASVFI), 40–60 (FVTFMCVFSIAALLATVMLLP), 95–115 (VIYYSLYFLDALLCLVGIPFA), 144–164 (YTLAFIAVVIALVLVGFFAPM), and 188–208 (AFTFLLGFVTTIGSCLYVFYT). Asn228 carries an N-linked (GlcNAc...) asparagine glycan. 4 helical membrane-spanning segments follow: residues 314–334 (GGFSLFLVGLSTWISLLMTVI), 374–394 (IIFALIVFLFFWGSVVGVVAV), 416–436 (MLLATAMLTLITLGLNYSVVM), and 506–526 (FGALLLWAHFLFLGIYLVILV). The interval 537-563 (ERQLDEDAEEAEEESLLASTGRSGNPT) is disordered. Over residues 539 to 551 (QLDEDAEEAEEES) the composition is skewed to acidic residues.

It belongs to the LIMR family. LMBRD1 subfamily.

The protein localises to the lysosome membrane. Its function is as follows. Probable lysosomal cobalamin transporter. Required to export cobalamin from lysosomes allowing its conversion to cofactors. The protein is Probable lysosomal cobalamin transporter of Neosartorya fischeri (strain ATCC 1020 / DSM 3700 / CBS 544.65 / FGSC A1164 / JCM 1740 / NRRL 181 / WB 181) (Aspergillus fischerianus).